An 800-amino-acid polypeptide reads, in one-letter code: MAETAAGLCRFKANYAVERKIEPFYKGGKAQLDQTGRHLFCVCGTKVNILDVASGDLIRSLEQEDQEDITAFDLSPDDEVLVTASRALLLAQWAWREGTVARLWKAIHTAPVASMAFDATSTLLATGGCDGAVRVWDIVQHYGTHHFRGSPGVVHLVAFHPDPTRLLLFSSAVDTSIRVWSLQDRSCLAVLTAHYSAVTSLSFSEDGHTMLSSGRDKICIVWDLRSYETSRTVPVFESVEASVLLPEEPALALGVKNSGLHFLTAGDQGILRVWEAASGQCVYTQPQMSGLRQELTHCTLARAAGLLLTVTADHNLLLYEARSLQLQKQFAGYSEEVLDVRFLGPNDSHIIVASNSPCLKVFELQTLACQILHGHTDIVLALDVFRKGWLFASCAKDQSIRIWRMNKAGQVACVAQGSGHTHSVGTICCSRLKESFLVTGSQDCTVKLWPLPEALPSKNTASDGDLIPLQAQSTQRCHDKDINSLAVSPNDKLLATGSQDRTAKLWALPQCQLLGVFSGHRRGLWNVQFSPTDQVLATASADGTIKLWALQDFSCLKTFEGHDASVLKVAFVSRGAQLLSSGSDGLLKLWTIKSNECVRTLDAHEDKVWGLHCSRLDDHAITGGSDSRIILWKDVTEAEQAEEQAKREEQVIKQQELDNLLHEKRYLRALGLAISLDRPHTVLTVIQAIRRDPEACEKLEATVLRLRRDQKEALLRFCITWNTNSRHCHEAQAVLGVLLRHEAPEELLAYDGVRGALEALLPYTERHFQRLSRTLQAATFLDFLWHNMKLSPLPAAPPAL.

An N-acetylalanine modification is found at Ala2. WD repeat units lie at residues 64–105 (EDQE…RLWK), 107–146 (IHTA…GTHH), 149–190 (GSPG…CLAV), 193–232 (AHYS…TSRT), 245–284 (LPEE…CVYT), 290–329 (GLRQ…LQKQ), 332–372 (GYSE…CQIL), 374–413 (GHTD…QVAC), 419–459 (GHTH…PSKN), 477–516 (CHDK…LLGV), 519–560 (GHRR…KTFE), 562–602 (HDAS…RTLD), and 604–642 (HEDK…EQAE). Lys407 participates in a covalent cross-link: Glycyl lysine isopeptide (Lys-Gly) (interchain with G-Cter in SUMO2).

As to quaternary structure, part of the small subunit (SSU) processome, composed of more than 70 proteins and the RNA chaperone small nucleolar RNA (snoRNA) U3.

It is found in the nucleus. Its subcellular location is the nucleolus. Part of the small subunit (SSU) processome, first precursor of the small eukaryotic ribosomal subunit. During the assembly of the SSU processome in the nucleolus, many ribosome biogenesis factors, an RNA chaperone and ribosomal proteins associate with the nascent pre-rRNA and work in concert to generate RNA folding, modifications, rearrangements and cleavage as well as targeted degradation of pre-ribosomal RNA by the RNA exosome. The protein is Transducin beta-like protein 3 (Tbl3) of Rattus norvegicus (Rat).